The sequence spans 43 residues: Protein PsbN (43 aa).

The helical transmembrane segment at 3 to 23 (IATLVAIFISGLLVSFTGYAL) threads the bilayer.

The protein belongs to the PsbN family.

The protein localises to the plastid. It is found in the chloroplast thylakoid membrane. May play a role in photosystem I and II biogenesis. The sequence is that of Protein PsbN from Euonymus alatus (Burning bush).